Here is a 539-residue protein sequence, read N- to C-terminus: MADTKYIFVTGGVVSSLGKGIVAASLGKLLQARGFNVALQKFDPYINIDPGTLNPYEHGECYVTEDGHEADLDLGHYERFLNTPTTRANNITTGRIYQNVIRKERKGEYLGKTVQVVPHITDEIKRNVKLLGQKSQYDFVITEIGGTVGDIESLPFLESVRQLKWELGQNCLCVHLTYVPYIAAAGEVKTKPTQHSVKQLQEVGIQPDILVLRTEHELQPDILKKVALFCNVAPDSVVQSVDVPTIYEVPLVLQQQHMDETVLRKVGLQVGPVPEMRQWHEFLEMKHTARETVTIALVGKYVELQDAYKSIDESLMQAAIYNRKKLNLISVHSEKVTEANVAETLKDMDGIVIAPGFGSRGVEGKLIALKYARENDLPTLGICLGMQCMVIEYARNVLGFKDANTTEIESNIEHKVIDLMDEQKTVTDMGGSMRLGAYDCALRKGSKLAAAYGKEFVRERHRHRFEFNSQYREAFEKAGMQCVGENPETGLVEAVEVPACRWFVGVQFHPEYNSTVVNPNPLFMAFIREAIKTRKKDKE.

Residues M1–L268 form an amidoligase domain region. S15 is a binding site for CTP. UTP is bound at residue S15. S16–I21 is an ATP binding site. Y56 is a binding site for L-glutamine. Residue D73 coordinates ATP. Mg(2+) is bound by residues D73 and E143. Residues D150 to E152, K189 to Q194, and K225 each bind CTP. Residues K189–Q194 and K225 contribute to the UTP site. Positions T294–K536 constitute a Glutamine amidotransferase type-1 domain. G356 is an L-glutamine binding site. Residue C383 is the Nucleophile; for glutamine hydrolysis of the active site. Residues L384 to Q387, E407, and R464 each bind L-glutamine. Catalysis depends on residues H509 and E511.

It belongs to the CTP synthase family. In terms of assembly, homotetramer.

It catalyses the reaction UTP + L-glutamine + ATP + H2O = CTP + L-glutamate + ADP + phosphate + 2 H(+). The catalysed reaction is L-glutamine + H2O = L-glutamate + NH4(+). The enzyme catalyses UTP + NH4(+) + ATP = CTP + ADP + phosphate + 2 H(+). The protein operates within pyrimidine metabolism; CTP biosynthesis via de novo pathway; CTP from UDP: step 2/2. Allosterically activated by GTP, when glutamine is the substrate; GTP has no effect on the reaction when ammonia is the substrate. The allosteric effector GTP functions by stabilizing the protein conformation that binds the tetrahedral intermediate(s) formed during glutamine hydrolysis. Inhibited by the product CTP, via allosteric rather than competitive inhibition. Functionally, catalyzes the ATP-dependent amination of UTP to CTP with either L-glutamine or ammonia as the source of nitrogen. Regulates intracellular CTP levels through interactions with the four ribonucleotide triphosphates. In Porphyromonas gingivalis (strain ATCC BAA-308 / W83), this protein is CTP synthase.